A 294-amino-acid chain; its full sequence is tRNA pseudouridine synthase B (294 aa).

Asp-39 acts as the Nucleophile in catalysis.

The protein belongs to the pseudouridine synthase TruB family. Type 1 subfamily.

The catalysed reaction is uridine(55) in tRNA = pseudouridine(55) in tRNA. In terms of biological role, responsible for synthesis of pseudouridine from uracil-55 in the psi GC loop of transfer RNAs. The chain is tRNA pseudouridine synthase B from Streptococcus pyogenes serotype M28 (strain MGAS6180).